Here is a 131-residue protein sequence, read N- to C-terminus: Global transcriptional regulator Spx (131 aa).

Cysteine 10 and cysteine 13 are oxidised to a cystine.

It belongs to the ArsC family. Spx subfamily. In terms of assembly, interacts with the C-terminal domain of the alpha subunit of the RNAP.

The protein localises to the cytoplasm. Its function is as follows. Global transcriptional regulator that plays a key role in stress response and exerts either positive or negative regulation of genes. Acts by interacting with the C-terminal domain of the alpha subunit of the RNA polymerase (RNAP). This interaction can enhance binding of RNAP to the promoter region of target genes and stimulate their transcription, or block interaction of RNAP with activator. The chain is Global transcriptional regulator Spx from Staphylococcus haemolyticus (strain JCSC1435).